A 303-amino-acid chain; its full sequence is MRILFLGTPDFASVHLEFLMKNGFDVVAVISQPDKPKGRGKKILPTPVKEVALKYNIPVFQPKKLNKEGLKIIENLKPDIGIVVAYGKLLKPPFLNTLEFYNVHASLLPSYRGAAPIQRVLENGEKRTGITIFKIGEGMDDGPIALKKEVEVGEFETFGELYEKLLDLGKKALIEFLNNYPIELIPQEGKVSFAPKITKEDLKLDFSKDVTFVKNKIRAYDPLPGVRVLFKRKIVKLFGVFSVLENSSREIGKIISIDKEGALISCENGSVKVRYIQFPGKRKMTFFEAKNGCLIKEGECFDC.

106–109 (SLLP) serves as a coordination point for (6S)-5,6,7,8-tetrahydrofolate.

This sequence belongs to the Fmt family.

The catalysed reaction is L-methionyl-tRNA(fMet) + (6R)-10-formyltetrahydrofolate = N-formyl-L-methionyl-tRNA(fMet) + (6S)-5,6,7,8-tetrahydrofolate + H(+). In terms of biological role, attaches a formyl group to the free amino group of methionyl-tRNA(fMet). The formyl group appears to play a dual role in the initiator identity of N-formylmethionyl-tRNA by promoting its recognition by IF2 and preventing the misappropriation of this tRNA by the elongation apparatus. The polypeptide is Methionyl-tRNA formyltransferase (Thermosipho melanesiensis (strain DSM 12029 / CIP 104789 / BI429)).